The primary structure comprises 261 residues: Type III pantothenate kinase (261 aa).

Asp-6 to Val-13 is a binding site for ATP. Gly-108–Arg-111 provides a ligand contact to substrate. Catalysis depends on Asp-110, which acts as the Proton acceptor. K(+) is bound at residue Asp-130. Thr-133 contributes to the ATP binding site. Substrate is bound at residue Thr-185.

The protein belongs to the type III pantothenate kinase family. Homodimer. It depends on NH4(+) as a cofactor. Requires K(+) as cofactor.

The protein resides in the cytoplasm. The catalysed reaction is (R)-pantothenate + ATP = (R)-4'-phosphopantothenate + ADP + H(+). Its pathway is cofactor biosynthesis; coenzyme A biosynthesis; CoA from (R)-pantothenate: step 1/5. Its function is as follows. Catalyzes the phosphorylation of pantothenate (Pan), the first step in CoA biosynthesis. The protein is Type III pantothenate kinase of Rhodospirillum centenum (strain ATCC 51521 / SW).